Here is a 364-residue protein sequence, read N- to C-terminus: Dual-specificity RNA methyltransferase RlmN (364 aa).

Glutamate 91 functions as the Proton acceptor in the catalytic mechanism. The Radical SAM core domain maps to 102–337; it reads GTLRITQCLS…AIIRKSKGQD (236 aa). Cysteines 109 and 342 form a disulfide. [4Fe-4S] cluster contacts are provided by cysteine 116, cysteine 120, and cysteine 123. S-adenosyl-L-methionine contacts are provided by residues 169-170, serine 201, 223-225, and asparagine 299; these read GE and SLH. Residue cysteine 342 is the S-methylcysteine intermediate of the active site.

This sequence belongs to the radical SAM superfamily. RlmN family. The cofactor is [4Fe-4S] cluster.

The protein localises to the cytoplasm. The catalysed reaction is adenosine(2503) in 23S rRNA + 2 reduced [2Fe-2S]-[ferredoxin] + 2 S-adenosyl-L-methionine = 2-methyladenosine(2503) in 23S rRNA + 5'-deoxyadenosine + L-methionine + 2 oxidized [2Fe-2S]-[ferredoxin] + S-adenosyl-L-homocysteine. It carries out the reaction adenosine(37) in tRNA + 2 reduced [2Fe-2S]-[ferredoxin] + 2 S-adenosyl-L-methionine = 2-methyladenosine(37) in tRNA + 5'-deoxyadenosine + L-methionine + 2 oxidized [2Fe-2S]-[ferredoxin] + S-adenosyl-L-homocysteine. Specifically methylates position 2 of adenine 2503 in 23S rRNA and position 2 of adenine 37 in tRNAs. m2A2503 modification seems to play a crucial role in the proofreading step occurring at the peptidyl transferase center and thus would serve to optimize ribosomal fidelity. This is Dual-specificity RNA methyltransferase RlmN from Nitratidesulfovibrio vulgaris (strain ATCC 29579 / DSM 644 / CCUG 34227 / NCIMB 8303 / VKM B-1760 / Hildenborough) (Desulfovibrio vulgaris).